A 66-amino-acid chain; its full sequence is Large ribosomal subunit protein bL35c (66 aa).

It belongs to the bacterial ribosomal protein bL35 family.

It localises to the plastid. The protein resides in the chloroplast. The protein is Large ribosomal subunit protein bL35c of Gracilaria tenuistipitata var. liui (Red alga).